Reading from the N-terminus, the 193-residue chain is Major structural subunit of bundle-forming pilus (193 aa).

The propeptide occupies 1-13 (MVSKIMNKKYEKG). Leu14 is modified (N-methylleucine). The helical transmembrane segment at 14–35 (LSLIESAMVLALAATVTAGVMF) threads the bilayer. Cysteines 129 and 179 form a disulfide.

It belongs to the N-Me-Phe pilin family. As to quaternary structure, 10 to 100 laterally aligned filaments or bundle-forming pili coalesce into rope-like bundles. These form linkages between the bacteria within the enteropathogenic E.coli (EPEC) microcolonies that are attached to epithelial cells.

The protein localises to the fimbrium. The protein resides in the membrane. Its function is as follows. Major repeating bundle-forming pilus (BFP) subunit. Is required for EPEC localized adherence. This is Major structural subunit of bundle-forming pilus (bfpA) from Escherichia coli O111:H-.